Reading from the N-terminus, the 178-residue chain is Transcription factor E (178 aa).

In terms of domain architecture, HTH TFE/IIEalpha-type spans 4–88 (AEDLFINLAK…YWKPNIDQIN (85 aa)).

It belongs to the TFE family. In terms of assembly, monomer. Interaction with RNA polymerase subunits RpoF and RpoE is necessary for Tfe stimulatory transcription activity. Able to interact with Tbp and RNA polymerase in the absence of DNA promoter. Interacts both with the preinitiation and elongation complexes.

Functionally, transcription factor that plays a role in the activation of archaeal genes transcribed by RNA polymerase. Facilitates transcription initiation by enhancing TATA-box recognition by TATA-box-binding protein (Tbp), and transcription factor B (Tfb) and RNA polymerase recruitment. Not absolutely required for transcription in vitro, but particularly important in cases where Tbp or Tfb function is not optimal. It dynamically alters the nucleic acid-binding properties of RNA polymerases by stabilizing the initiation complex and destabilizing elongation complexes. Seems to translocate with the RNA polymerase following initiation and acts by binding to the non template strand of the transcription bubble in elongation complexes. The polypeptide is Transcription factor E (Saccharolobus islandicus (strain L.S.2.15 / Lassen #1) (Sulfolobus islandicus)).